Here is a 217-residue protein sequence, read N- to C-terminus: Small ribosomal subunit protein uS3 (217 aa).

A KH type-2 domain is found at 40–110 (IRDLINNSFN…EVYINIHEVR (71 aa)).

It belongs to the universal ribosomal protein uS3 family. In terms of assembly, part of the 30S ribosomal subunit. Forms a tight complex with proteins S10 and S14.

Its function is as follows. Binds the lower part of the 30S subunit head. Binds mRNA in the 70S ribosome, positioning it for translation. This chain is Small ribosomal subunit protein uS3, found in Rickettsia canadensis (strain McKiel).